Here is a 974-residue protein sequence, read N- to C-terminus: Kinesin-like protein KIN-7A (974 aa).

A disordered region spans residues 1-29 (MTIKTPGTPVSKMDRTPAVTPGGSSRSRE). Residues 31–353 (KIVVTVRLRP…LYFANRAKEV (323 aa)) form the Kinesin motor domain. Residue 117-124 (GQTSSGKT) coordinates ATP. 2 coiled-coil regions span residues 362 to 435 (VVSD…KGLN) and 565 to 603 (SANL…VMSL). 2 disordered regions span residues 605 to 649 (SNIS…PCSP) and 663 to 713 (NKAP…SSVN). Residues 616–628 (TKNHHHQSKKKKL) show a composition bias toward basic residues. 2 stretches are compositionally biased toward polar residues: residues 638 to 649 (NRQNFLKSPCSP) and 666 to 682 (PQEN…TPQG). Residues 683–693 (SEKETPQKGEE) show a composition bias toward basic and acidic residues.

Belongs to the TRAFAC class myosin-kinesin ATPase superfamily. Kinesin family. KIN-7 subfamily. Post-translationally, phosphorylated at Thr-145, Thr-687 and Thr-703 by CDKAs and CDKBs. Phosphorylated NACK1 fails to mediate cytokinesis. As to expression, expressed in roots, flowers, pollen mother cells and embryos.

The protein resides in the cytoplasm. It is found in the cytoskeleton. It localises to the phragmoplast. Its function is as follows. Probable plus end-directed motor protein that functions in the NACK-PQR (ANP1-MKK6-MPK4) MAP kinase signaling pathway, which is essential for somatic cell cytokinesis, especially for the cell-plate formation and its expansion. Regulates the activity and the localization of ANP1, probably by association through the non-catalytic region of the kinase. Functionally redundant with NACK2 and essential to promote the progression of cytokinesis and for cellularization (formation of the cell plate) during microgametogenesis and megagametogenesis. The protein is Kinesin-like protein KIN-7A of Arabidopsis thaliana (Mouse-ear cress).